Reading from the N-terminus, the 250-residue chain is Ditrans,polycis-undecaprenyl-diphosphate synthase ((2E,6E)-farnesyl-diphosphate specific) (250 aa).

Residue Asp-27 is part of the active site. Asp-27 is a Mg(2+) binding site. Substrate is bound by residues Gly-28–Arg-31, Trp-32, Arg-40, His-44, and Ser-72–Glu-74. Asn-75 serves as the catalytic Proton acceptor. Positions 76, 78, and 195 each coordinate substrate. Mg(2+) is bound at residue His-200. Arg-201 to Ser-203 is a binding site for substrate. Residue Glu-214 participates in Mg(2+) binding.

It belongs to the UPP synthase family. Homodimer. Requires Mg(2+) as cofactor.

The catalysed reaction is 8 isopentenyl diphosphate + (2E,6E)-farnesyl diphosphate = di-trans,octa-cis-undecaprenyl diphosphate + 8 diphosphate. Catalyzes the sequential condensation of isopentenyl diphosphate (IPP) with (2E,6E)-farnesyl diphosphate (E,E-FPP) to yield (2Z,6Z,10Z,14Z,18Z,22Z,26Z,30Z,34E,38E)-undecaprenyl diphosphate (di-trans,octa-cis-UPP). UPP is the precursor of glycosyl carrier lipid in the biosynthesis of bacterial cell wall polysaccharide components such as peptidoglycan and lipopolysaccharide. The protein is Ditrans,polycis-undecaprenyl-diphosphate synthase ((2E,6E)-farnesyl-diphosphate specific) of Blochmanniella floridana.